The chain runs to 451 residues: NADP-specific glutamate dehydrogenase (451 aa).

Lys113 is a catalytic residue. Ser252 is subject to Phosphoserine.

This sequence belongs to the Glu/Leu/Phe/Val dehydrogenases family. In terms of assembly, homohexamer.

The enzyme catalyses L-glutamate + NADP(+) + H2O = 2-oxoglutarate + NH4(+) + NADPH + H(+). The sequence is that of NADP-specific glutamate dehydrogenase (gdh1) from Schizosaccharomyces pombe (strain 972 / ATCC 24843) (Fission yeast).